Here is a 268-residue protein sequence, read N- to C-terminus: Bis(5'-nucleosyl)-tetraphosphatase, symmetrical (268 aa).

It belongs to the Ap4A hydrolase family.

It catalyses the reaction P(1),P(4)-bis(5'-adenosyl) tetraphosphate + H2O = 2 ADP + 2 H(+). Its function is as follows. Hydrolyzes diadenosine 5',5'''-P1,P4-tetraphosphate to yield ADP. The chain is Bis(5'-nucleosyl)-tetraphosphatase, symmetrical from Vibrio campbellii (strain ATCC BAA-1116).